The chain runs to 677 residues: Pre-mRNA-splicing factor CLF1 (677 aa).

HAT repeat units follow at residues 52-84 (EYQG…WELE), 86-118 (KEFR…AEMK), 120-152 (RNIN…MEEM), 154-185 (GNIP…LEKR), 187-218 (NEFD…FEEE), 220-255 (GTSD…YEAK), 257-291 (KEFE…FEKQ), 301-333 (VILS…LEES), 335-369 (GDVE…LWIF), 379-415 (KDME…FEIR), 417-448 (MDLQ…LERQ), 450-482 (FEFV…LERG), 484-518 (DDID…FEEY), 520-551 (GEYD…FEIN), 570-608 (EAKR…FEQT), and 613-646 (DDIA…YMFP).

It belongs to the crooked-neck family. In terms of assembly, associated with the spliceosome.

It is found in the nucleus. Its function is as follows. Involved in pre-mRNA splicing and cell cycle progression. Required for the spliceosome assembly and initiation of the DNA replication. In Paracoccidioides brasiliensis, this protein is Pre-mRNA-splicing factor CLF1 (CLF1).